The following is a 319-amino-acid chain: Ribonuclease Z (319 aa).

Residues H62, H64, D66, H67, H139, D209, and H268 each contribute to the Zn(2+) site. The active-site Proton acceptor is the D66.

It belongs to the RNase Z family. As to quaternary structure, homodimer. Requires Zn(2+) as cofactor.

The enzyme catalyses Endonucleolytic cleavage of RNA, removing extra 3' nucleotides from tRNA precursor, generating 3' termini of tRNAs. A 3'-hydroxy group is left at the tRNA terminus and a 5'-phosphoryl group is left at the trailer molecule.. Its function is as follows. Zinc phosphodiesterase, which displays some tRNA 3'-processing endonuclease activity. Probably involved in tRNA maturation, by removing a 3'-trailer from precursor tRNA. This chain is Ribonuclease Z, found in Pseudomonas putida (strain ATCC 700007 / DSM 6899 / JCM 31910 / BCRC 17059 / LMG 24140 / F1).